Consider the following 1091-residue polypeptide: Multiple epidermal growth factor-like domains protein 11 (1091 aa).

Positions 1–18 are cleaved as a signal peptide; the sequence is MAPSAVGLLVFLLQAALA. At 19 to 847 the chain is on the extracellular side; it reads LNPEDPNVCS…SPALGAERHS (829 aa). The EMI domain occupies 23–100; that stretch reads DPNVCSHWES…YYENGDFCIP (78 aa). 14 cysteine pairs are disulfide-bonded: Cys-27–Cys-88, Cys-53–Cys-62, Cys-87–Cys-98, Cys-102–Cys-117, Cys-119–Cys-128, Cys-145–Cys-153, Cys-147–Cys-160, Cys-162–Cys-171, Cys-184–Cys-196, Cys-190–Cys-203, Cys-205–Cys-214, Cys-227–Cys-239, Cys-233–Cys-246, and Cys-248–Cys-257. EGF-like domains lie at 94-129, 142-172, 180-215, 223-258, 266-301, 314-344, 398-433, 441-476, and 484-519; these read NGDF…PDCS, SNRC…WRCE, HGKG…VYCE, HGAH…AVCA, FGQN…DRCQ, SQRC…PSCQ, YGNG…EVCA, YGPN…LDCS, and WGLN…DSCE. Residue Asn-269 is glycosylated (N-linked (GlcNAc...) asparagine). 15 disulfide bridges follow: Cys-270/Cys-282, Cys-276/Cys-289, Cys-291/Cys-300, Cys-317/Cys-325, Cys-319/Cys-332, Cys-334/Cys-343, Cys-402/Cys-414, Cys-408/Cys-421, Cys-423/Cys-432, Cys-445/Cys-457, Cys-451/Cys-464, Cys-466/Cys-475, Cys-488/Cys-500, Cys-494/Cys-507, and Cys-509/Cys-518. Residue Asn-530 is glycosylated (N-linked (GlcNAc...) asparagine). EGF-like domains are found at residues 570-605, 613-650, 658-693, 706-736, 749-779, and 787-822; these read WGPN…PLCQ, YGHG…ALCN, FGQD…KDCS, FHTC…LFCT, GHIC…RHCE, and FGYG…IRCD. Disulfide bonds link Cys-574/Cys-586, Cys-580/Cys-593, Cys-595/Cys-604, Cys-617/Cys-631, Cys-621/Cys-638, Cys-640/Cys-649, Cys-662/Cys-674, Cys-668/Cys-681, Cys-683/Cys-692, Cys-709/Cys-717, Cys-711/Cys-724, Cys-726/Cys-735, Cys-752/Cys-760, Cys-754/Cys-767, Cys-769/Cys-778, Cys-791/Cys-803, Cys-797/Cys-810, and Cys-812/Cys-821. A helical membrane pass occupies residues 848–868; the sequence is VGAVTGIVLLLFLVVVLLGLF. Topologically, residues 869 to 1091 are cytoplasmic; it reads AWRRRRQKEK…NIYEVGRCLT (223 aa).

This sequence belongs to the MEGF family. Homomer. Does not interact with MEGF10.

It localises to the cell membrane. The protein resides in the basolateral cell membrane. Functionally, may regulate the mosaic spacing of specific neuron subtypes in the retina through homotypic retinal neuron repulsion. Mosaics provide a mechanism to distribute each cell type evenly across the retina, ensuring that all parts of the visual field have access to a full set of processing elements. The polypeptide is Multiple epidermal growth factor-like domains protein 11 (Megf11) (Mus musculus (Mouse)).